The following is a 271-amino-acid chain: Thiazole synthase (271 aa).

Catalysis depends on K104, which acts as the Schiff-base intermediate with DXP. 1-deoxy-D-xylulose 5-phosphate-binding positions include G165, 192–193 (AG), and 214–215 (NT).

This sequence belongs to the ThiG family. As to quaternary structure, homotetramer. Forms heterodimers with either ThiH or ThiS.

It is found in the cytoplasm. It catalyses the reaction [ThiS sulfur-carrier protein]-C-terminal-Gly-aminoethanethioate + 2-iminoacetate + 1-deoxy-D-xylulose 5-phosphate = [ThiS sulfur-carrier protein]-C-terminal Gly-Gly + 2-[(2R,5Z)-2-carboxy-4-methylthiazol-5(2H)-ylidene]ethyl phosphate + 2 H2O + H(+). It participates in cofactor biosynthesis; thiamine diphosphate biosynthesis. In terms of biological role, catalyzes the rearrangement of 1-deoxy-D-xylulose 5-phosphate (DXP) to produce the thiazole phosphate moiety of thiamine. Sulfur is provided by the thiocarboxylate moiety of the carrier protein ThiS. In vitro, sulfur can be provided by H(2)S. This Burkholderia thailandensis (strain ATCC 700388 / DSM 13276 / CCUG 48851 / CIP 106301 / E264) protein is Thiazole synthase.